Reading from the N-terminus, the 128-residue chain is Mu-like prophage FluMu protein gp35 (128 aa).

The segment at 53–87 (TETGSQEGGEGLSKEPAGSDEQKQLRADPPSTDLN) is disordered.

The protein to phage Mu protein gp35. In terms of assembly, monomer.

This is Mu-like prophage FluMu protein gp35 from Haemophilus influenzae (strain ATCC 51907 / DSM 11121 / KW20 / Rd).